A 125-amino-acid polypeptide reads, in one-letter code: Ribosome-binding factor A (125 aa).

It belongs to the RbfA family. Monomer. Binds 30S ribosomal subunits, but not 50S ribosomal subunits or 70S ribosomes.

The protein resides in the cytoplasm. Functionally, one of several proteins that assist in the late maturation steps of the functional core of the 30S ribosomal subunit. Associates with free 30S ribosomal subunits (but not with 30S subunits that are part of 70S ribosomes or polysomes). Required for efficient processing of 16S rRNA. May interact with the 5'-terminal helix region of 16S rRNA. In Xylella fastidiosa (strain M12), this protein is Ribosome-binding factor A.